The primary structure comprises 209 residues: Ribonuclease HII (209 aa).

Positions 20-209 (QLEIGIDEVG…KSFLTKLNLI (190 aa)) constitute an RNase H type-2 domain. A divalent metal cation-binding residues include D26, E27, and D122.

Belongs to the RNase HII family. It depends on Mn(2+) as a cofactor. The cofactor is Mg(2+).

Its subcellular location is the cytoplasm. The enzyme catalyses Endonucleolytic cleavage to 5'-phosphomonoester.. Endonuclease that specifically degrades the RNA of RNA-DNA hybrids. The polypeptide is Ribonuclease HII (Prochlorococcus marinus (strain MIT 9515)).